The following is a 432-amino-acid chain: Probable pectate lyase 22 (432 aa).

A signal peptide spans 1–45; sequence MFRPNSLLIPSNLSTTKSQRNTMLNSSYLSFALIFFCCILFSALA. An N-linked (GlcNAc...) asparagine glycan is attached at N65. The Ca(2+) site is built by D228, D252, and D256. R308 is a catalytic residue.

Belongs to the polysaccharide lyase 1 family. Requires Ca(2+) as cofactor.

It catalyses the reaction Eliminative cleavage of (1-&gt;4)-alpha-D-galacturonan to give oligosaccharides with 4-deoxy-alpha-D-galact-4-enuronosyl groups at their non-reducing ends.. It participates in glycan metabolism; pectin degradation; 2-dehydro-3-deoxy-D-gluconate from pectin: step 2/5. The sequence is that of Probable pectate lyase 22 from Arabidopsis thaliana (Mouse-ear cress).